The following is a 364-amino-acid chain: D-alanine--D-alanine ligase (364 aa).

The region spanning 134-347 (RRLACINGLK…YPDLLDELIN (214 aa)) is the ATP-grasp domain. 167–222 (ASEFGWPLFVKPCSLGSSVGIHKANNMDELNAAVADALRYDEEILVEEFIVGREIE) provides a ligand contact to ATP. Mg(2+) is bound by residues Asp-300, Glu-314, and Asn-316.

The protein belongs to the D-alanine--D-alanine ligase family. Mg(2+) is required as a cofactor. The cofactor is Mn(2+).

The protein localises to the cytoplasm. It catalyses the reaction 2 D-alanine + ATP = D-alanyl-D-alanine + ADP + phosphate + H(+). The protein operates within cell wall biogenesis; peptidoglycan biosynthesis. In terms of biological role, cell wall formation. The sequence is that of D-alanine--D-alanine ligase from Legionella pneumophila (strain Paris).